The primary structure comprises 318 residues: Deacetoxycephalosporin C hydroxylase (318 aa).

A Fe2OG dioxygenase domain is found at 158–271 (DADPVLRLRY…RTSSVFFLRP (114 aa)).

The protein belongs to the iron/ascorbate-dependent oxidoreductase family. In terms of assembly, monomer. The cofactor is Fe cation.

The enzyme catalyses deacetoxycephalosporin C + 2-oxoglutarate + O2 = deacetylcephalosporin C + succinate + CO2. It participates in antibiotic biosynthesis; cephalosporin C biosynthesis. In terms of biological role, hydroxylation of desacetoxicephalosporin C in 3'position to form deacetylcephalosporin C. The polypeptide is Deacetoxycephalosporin C hydroxylase (cefF) (Streptomyces clavuligerus).